The chain runs to 302 residues: D-alanine--D-alanine ligase (302 aa).

The region spanning Lys100–Gln294 is the ATP-grasp domain. ATP is bound at residue Gly127–Thr180. The Mg(2+) site is built by Asp248, Glu261, and Asn263.

This sequence belongs to the D-alanine--D-alanine ligase family. Mg(2+) serves as cofactor. Mn(2+) is required as a cofactor.

The protein localises to the cytoplasm. It carries out the reaction 2 D-alanine + ATP = D-alanyl-D-alanine + ADP + phosphate + H(+). Its pathway is cell wall biogenesis; peptidoglycan biosynthesis. Functionally, cell wall formation. This chain is D-alanine--D-alanine ligase, found in Lawsonia intracellularis (strain PHE/MN1-00).